The chain runs to 85 residues: NADH-ubiquinone oxidoreductase chain 4L (85 aa).

2 helical membrane-spanning segments follow: residues 21-41 and 51-71; these read LLVTLLSLEFLILLLFSLLVY and FIFLSVTVCEGALGFSVLVSL.

This sequence belongs to the complex I subunit 4L family.

The protein resides in the mitochondrion membrane. It catalyses the reaction a ubiquinone + NADH + 5 H(+)(in) = a ubiquinol + NAD(+) + 4 H(+)(out). Core subunit of the mitochondrial membrane respiratory chain NADH dehydrogenase (Complex I) that is believed to belong to the minimal assembly required for catalysis. Complex I functions in the transfer of electrons from NADH to the respiratory chain. The immediate electron acceptor for the enzyme is believed to be ubiquinone. This is NADH-ubiquinone oxidoreductase chain 4L (ND4L) from Artemia franciscana (Brine shrimp).